The following is a 557-amino-acid chain: UvrABC system protein C (557 aa).

In terms of domain architecture, GIY-YIG spans 14-89 (EEPGVYIFKN…IKKYRPKYNV (76 aa)). Residues 194-229 (EEVFDYLKEKMETHSKMLDFENAAKYRDLLLNLSNV) form the UVR domain.

The protein belongs to the UvrC family. In terms of assembly, interacts with UvrB in an incision complex.

It is found in the cytoplasm. In terms of biological role, the UvrABC repair system catalyzes the recognition and processing of DNA lesions. UvrC both incises the 5' and 3' sides of the lesion. The N-terminal half is responsible for the 3' incision and the C-terminal half is responsible for the 5' incision. The chain is UvrABC system protein C from Thermotoga sp. (strain RQ2).